The chain runs to 138 residues: Nucleoside diphosphate kinase (138 aa).

ATP-binding residues include Lys9, Phe57, Arg85, Thr91, Arg102, and Asn112. His115 acts as the Pros-phosphohistidine intermediate in catalysis.

This sequence belongs to the NDK family. Homotetramer. The cofactor is Mg(2+).

It localises to the cytoplasm. The catalysed reaction is a 2'-deoxyribonucleoside 5'-diphosphate + ATP = a 2'-deoxyribonucleoside 5'-triphosphate + ADP. It catalyses the reaction a ribonucleoside 5'-diphosphate + ATP = a ribonucleoside 5'-triphosphate + ADP. In terms of biological role, major role in the synthesis of nucleoside triphosphates other than ATP. The ATP gamma phosphate is transferred to the NDP beta phosphate via a ping-pong mechanism, using a phosphorylated active-site intermediate. The sequence is that of Nucleoside diphosphate kinase from Trichlorobacter lovleyi (strain ATCC BAA-1151 / DSM 17278 / SZ) (Geobacter lovleyi).